The chain runs to 375 residues: Putative nuclease YhcG (375 aa).

As to quaternary structure, interacts with DNA processing enzymes, including the restriction complex HsdMRS, the integrases IntF and IntS, and the recombinase PinE.

Its function is as follows. May be a nuclease involved in DNA recombination and repair. This chain is Putative nuclease YhcG (yhcG), found in Escherichia coli (strain K12).